Reading from the N-terminus, the 62-residue chain is Snaclec aspercetin subunit beta (62 aa).

Residues Cys-2 and Cys-13 are joined by a disulfide bond. Residues 9–62 form the C-type lectin domain; the sequence is YEGHCYRVFKPPKDWADAERFCSQQAKGGHLVSIERFGREDFVSNLITKNLQRG.

It belongs to the snaclec family. In terms of assembly, heterodimer; disulfide-linked. In terms of tissue distribution, expressed by the venom gland.

It localises to the secreted. Functionally, snaclec that binds to von Willebrand factor (VWF) and induces its interaction with GPIbalpha (GP1BA) (via the vWF A1 domain), resulting in platelet aggregation. Intramuscular and intravenous injections in mice induce a dose-dependent drop in platelet count (thrombocytopenia). Pretreatment by intravenous injection by this protein in mice potentiates the hemorrhagic lesion in the skin provoked by the metalloproteinase BaP1 intradermally injected. This result is not observed when both BaP1 and this protein are injected simultaneously. In Bothrops asper (Terciopelo), this protein is Snaclec aspercetin subunit beta.